Here is a 371-residue protein sequence, read N- to C-terminus: N-acetyldiaminopimelate deacetylase (371 aa).

Asp-68 is an active-site residue. The active-site Proton acceptor is the Glu-127.

The protein belongs to the peptidase M20A family. N-acetyldiaminopimelate deacetylase subfamily.

The enzyme catalyses N-acetyl-(2S,6S)-2,6-diaminopimelate + H2O = (2S,6S)-2,6-diaminopimelate + acetate. The protein operates within amino-acid biosynthesis; L-lysine biosynthesis via DAP pathway; LL-2,6-diaminopimelate from (S)-tetrahydrodipicolinate (acetylase route): step 3/3. Functionally, catalyzes the conversion of N-acetyl-diaminopimelate to diaminopimelate and acetate. The polypeptide is N-acetyldiaminopimelate deacetylase (Listeria monocytogenes serovar 1/2a (strain ATCC BAA-679 / EGD-e)).